The following is a 532-amino-acid chain: Omega-hydroxyceramide transacylase (532 aa).

One can recognise a PNPLA domain in the interval 16–185 (ISFSGSGFLS…TGMQPCAFWT (170 aa)). A GXSXG motif is present at residues 51–55 (GTSAG). Residue Ser-53 is the Nucleophile of the active site. The active-site Proton acceptor is the Asp-172. The DGA/G signature appears at 172-174 (DGG). 2 disordered regions span residues 290 to 457 (PERS…ELGQ) and 489 to 532 (VTES…SKVQ). Over residues 310 to 322 (PHKEWVPKGDGRG) the composition is skewed to basic and acidic residues. Low complexity-rich tracts occupy residues 380–389 (PPSSTPGSSL) and 397–411 (SPLSPQQQVQPSGSP). The span at 517-532 (GFPRHSGSKKPSSKVQ) shows a compositional bias: basic residues.

Expressed in the digestive system. Expressed in the epidermis of skin keratinocytes. Strongly expressed in the granular layer. Expressed in the upper epidermis and eccrine sweat glands of the dermis and in the region of keratin filament bundles, which is more pronounced in upper epidermal layers and in the lower cornified layers.

The protein resides in the cytoplasm. The catalysed reaction is an N-(omega-hydroxy-ultra-long chain fatty acyl)-sphingoid base + a (9Z,12Z)-octadecadienoyl-containing triacyl-sn-glycerol = an N-[omega-(9Z,12Z-octadecadienoyloxy)-O-ultra-long chain fatty acyl]-sphingoid base + a diacylglycerol. The enzyme catalyses an N-(omega-hydroxy-ultra-long chain fatty acyl)-sphing-4-enine + a (9Z,12Z)-octadecadienoyl-containing triacyl-sn-glycerol = an N-(omega-(9Z,12Z-octadecadienoyloxy)-ultra-long chain fatty acyl)-sphing-4-enine + a diacylglycerol. It catalyses the reaction N-(30-hydroxytriacontanoyl)-sphing-4-enine + 1,2,3-tri-(9Z,12Z)-octadecadienoylglycerol = N-[30-(9Z,12Z-octadecadienoyloxy)-triacontanoyl]-sphing-4-enine + di-(9Z,12Z)-octadecadienoylglycerol. It carries out the reaction N-(28-hydroxyoctacosanoyl)-sphing-4-enine + a (9Z,12Z)-octadecadienoyl-containing triacyl-sn-glycerol = N-(28-(9Z,12Z-octadecadienoyloxy)-octacosanoyl)-sphing-4-enine + a diacylglycerol. The catalysed reaction is N-(32-hydroxydotriacontanoyl)-sphing-4-enine + a (9Z,12Z)-octadecadienoyl-containing triacyl-sn-glycerol = N-(32-(9Z,12Z-octadecadienoyloxy)-dotricontanoyl)-sphing-4-enine + a diacylglycerol. The enzyme catalyses N-(32-hydroxydotriacontenoyl)-sphing-4-enine + a (9Z,12Z)-octadecadienoyl-containing triacyl-sn-glycerol = an N-(32-(9Z,12Z-octadecadienoyloxy)-dotriacontenoyl)-sphing-4-enine + a diacylglycerol. It catalyses the reaction an N-(34-hydroxytetratriacontenoyl)-sphing-4-enine + a (9Z,12Z)-octadecadienoyl-containing triacyl-sn-glycerol = an N-(34-(9Z,12Z-octadecadienoyloxy)-tetratriacontenoyl)-sphing-4-enine + a diacylglycerol. It carries out the reaction an N-(34-hydroxytetratriacontadienoyl)-sphing-4-enine + a (9Z,12Z)-octadecadienoyl-containing triacyl-sn-glycerol = an N-(34-(9Z,12Z-octadecadienoyloxy)-tetratriacontadienoyl)-sphing-4-enine + a diacylglycerol. The catalysed reaction is an N-(36-hydroxyhexatriacontenoyl)-sphing-4-enine + a (9Z,12Z)-octadecadienoyl-containing triacyl-sn-glycerol = an N-(36-(9Z,12Z-octadecadienoyloxy)-hexatriacontenoyl)-sphing-4-enine + a diacylglycerol. The enzyme catalyses an N-(36-hydroxyhexatriacontadienoyl)-sphing-4-enine + a (9Z,12Z)-octadecadienoyl-containing triacyl-sn-glycerol = an N-(36-(9Z,12Z-octadecadienoyloxy)-hexatriacontadienoyl)-sphing-4-enine + a diacylglycerol. It catalyses the reaction an N-(38-hydroxyoctatriacontenoyl)-sphing-4-enine + a (9Z,12Z)-octadecadienoyl-containing triacyl-sn-glycerol = an N-(38-(9Z,12Z-octadecadienoyloxy)-octatriacontenoyl)-sphing-4-enine + a diacylglycerol. Its function is as follows. Omega-hydroxyceramide transacylase involved in the synthesis of omega-O-acylceramides (esterified omega-hydroxyacyl-sphingosine; EOS), which are extremely hydrophobic lipids involved in skin barrier formation. Catalyzes the last step of the synthesis of omega-O-acylceramides by transferring linoleic acid from triglycerides to an omega-hydroxyceramide. Omega-O-acylceramides, are required for the biogenesis of lipid lamellae in the stratum corneum and the formation of the cornified lipid envelope which are essential for the epidermis barrier function. These lipids also play a role in keratinocyte differentiation. May also act on omega-hydroxylated ultra-long chain fatty acids (omega-OH ULCFA) and acylglucosylceramides (GlcEOS). This is Omega-hydroxyceramide transacylase from Homo sapiens (Human).